The chain runs to 202 residues: Adenylyl-sulfate kinase (202 aa).

An ATP-binding site is contributed by glycine 35–serine 42. Residue serine 109 is the Phosphoserine intermediate of the active site.

This sequence belongs to the APS kinase family.

It catalyses the reaction adenosine 5'-phosphosulfate + ATP = 3'-phosphoadenylyl sulfate + ADP + H(+). It participates in sulfur metabolism; hydrogen sulfide biosynthesis; sulfite from sulfate: step 2/3. Catalyzes the synthesis of activated sulfate. The sequence is that of Adenylyl-sulfate kinase from Bacteroides fragilis (strain YCH46).